We begin with the raw amino-acid sequence, 117 residues long: Large ribosomal subunit protein uL18 (117 aa).

Belongs to the universal ribosomal protein uL18 family. Part of the 50S ribosomal subunit; part of the 5S rRNA/L5/L18/L25 subcomplex. Contacts the 5S and 23S rRNAs.

This is one of the proteins that bind and probably mediate the attachment of the 5S RNA into the large ribosomal subunit, where it forms part of the central protuberance. The chain is Large ribosomal subunit protein uL18 from Aliivibrio fischeri (strain ATCC 700601 / ES114) (Vibrio fischeri).